A 321-amino-acid chain; its full sequence is Chlorohydroquinone/hydroquinone 1,2-dioxygenase (321 aa).

2 VOC domains span residues 10 to 138 (GLHH…IIEQ) and 160 to 282 (GFHS…ASVT). Residues His162, His229, and Glu278 each contribute to the Fe cation site.

This sequence belongs to the extradiol ring-cleavage dioxygenase family. The cofactor is Fe(2+).

The catalysed reaction is hydroquinone + O2 = (2E,4Z)-4-hydroxy-6-oxohexa-2,4-dienoate + H(+). It catalyses the reaction chlorohydroquinone + O2 = 5-chlorocarbonyl-4-hydroxy-penta-2,4-dienoate + H(+). The protein operates within xenobiotic degradation; gamma-hexachlorocyclohexane degradation. Functionally, cleaves aromatic rings with two hydroxyl groups at para positions with consumption of O(2). Catalyzes the cleavage of chlorohydroquinone (CHQ), as part of the gamma-hexachlorocyclohexane (gamma-HCH or lindane) degradation pathway, producing 5-chlorocarbonyl-4-hydroxy-penta-2,4-dienoate as an intermediate product that can react with water yielding maleylacetate. This degradation pathway allows S.japonicum UT26 to grow on gamma-HCH as the sole source of carbon and energy. Can also use hydroquinone (HQ) as substrate, leading to gamma-hydroxymuconic semialdehyde. Is not able to convert catechol, contrary to meta-cleavage dioxygenases. In Sphingobium indicum (strain DSM 16413 / CCM 7287 / MTCC 6362 / UT26 / NBRC 101211 / UT26S) (Sphingobium japonicum), this protein is Chlorohydroquinone/hydroquinone 1,2-dioxygenase.